Reading from the N-terminus, the 179-residue chain is Inner membrane-spanning protein YciB (179 aa).

Transmembrane regions (helical) follow at residues Phe3 to Tyr23, Thr24 to His44, Pro49 to His69, Trp76 to Trp96, Leu121 to Phe141, and Phe149 to Leu169.

The protein belongs to the YciB family.

The protein localises to the cell inner membrane. Functionally, plays a role in cell envelope biogenesis, maintenance of cell envelope integrity and membrane homeostasis. This is Inner membrane-spanning protein YciB from Cupriavidus taiwanensis (strain DSM 17343 / BCRC 17206 / CCUG 44338 / CIP 107171 / LMG 19424 / R1) (Ralstonia taiwanensis (strain LMG 19424)).